A 306-amino-acid polypeptide reads, in one-letter code: Protein-L-isoaspartate O-methyltransferase 2 (306 aa).

Residues 1–82 (MSTTPPRNKF…ASAATAGGGG (82 aa)) are disordered. Residues 38–48 (PAAPTPAPAKP) show a composition bias toward pro residues. Positions 54-77 (PRTAAPAPAPVPASAVEQRASAAT) are enriched in low complexity. Serine 142 is a catalytic residue.

It belongs to the methyltransferase superfamily. L-isoaspartyl/D-aspartyl protein methyltransferase family.

The protein localises to the cytoplasm. The enzyme catalyses [protein]-L-isoaspartate + S-adenosyl-L-methionine = [protein]-L-isoaspartate alpha-methyl ester + S-adenosyl-L-homocysteine. In terms of biological role, catalyzes the methyl esterification of L-isoaspartyl residues in peptides and proteins that result from spontaneous decomposition of normal L-aspartyl and L-asparaginyl residues. It plays a role in the repair and/or degradation of damaged proteins. In Cupriavidus necator (strain ATCC 17699 / DSM 428 / KCTC 22496 / NCIMB 10442 / H16 / Stanier 337) (Ralstonia eutropha), this protein is Protein-L-isoaspartate O-methyltransferase 2.